Here is a 422-residue protein sequence, read N- to C-terminus: Enolase 2 (422 aa).

Position 162 (Q162) interacts with (2R)-2-phosphoglycerate. Catalysis depends on E204, which acts as the Proton donor. Mg(2+) is bound by residues D241, E285, and D312. Residues K337, R366, S367, and K388 each contribute to the (2R)-2-phosphoglycerate site. K337 (proton acceptor) is an active-site residue.

Belongs to the enolase family. Mg(2+) is required as a cofactor.

It localises to the cytoplasm. It is found in the secreted. The protein localises to the cell surface. The catalysed reaction is (2R)-2-phosphoglycerate = phosphoenolpyruvate + H2O. It functions in the pathway carbohydrate degradation; glycolysis; pyruvate from D-glyceraldehyde 3-phosphate: step 4/5. Functionally, catalyzes the reversible conversion of 2-phosphoglycerate (2-PG) into phosphoenolpyruvate (PEP). It is essential for the degradation of carbohydrates via glycolysis. The chain is Enolase 2 from Lactococcus lactis subsp. lactis (strain IL1403) (Streptococcus lactis).